A 150-amino-acid polypeptide reads, in one-letter code: Small ribosomal subunit protein uS9 (150 aa).

It belongs to the universal ribosomal protein uS9 family.

The protein is Small ribosomal subunit protein uS9 of Mycolicibacterium smegmatis (strain ATCC 700084 / mc(2)155) (Mycobacterium smegmatis).